Here is a 352-residue protein sequence, read N- to C-terminus: Uroporphyrinogen decarboxylase (352 aa).

Substrate is bound by residues 26 to 30 (RQAGR), Phe45, Asp76, Tyr153, Ser208, and His323.

Belongs to the uroporphyrinogen decarboxylase family. Homodimer.

It is found in the cytoplasm. The catalysed reaction is uroporphyrinogen III + 4 H(+) = coproporphyrinogen III + 4 CO2. It participates in porphyrin-containing compound metabolism; protoporphyrin-IX biosynthesis; coproporphyrinogen-III from 5-aminolevulinate: step 4/4. Catalyzes the decarboxylation of four acetate groups of uroporphyrinogen-III to yield coproporphyrinogen-III. This chain is Uroporphyrinogen decarboxylase, found in Parasynechococcus marenigrum (strain WH8102).